The primary structure comprises 375 residues: Outer membrane porin OmpD (375 aa).

Positions 1-34 (MRKHAKKIIRIIKMKLKLVAVAVTSLLAAGVVNA) are cleaved as a signal peptide.

This sequence belongs to the Gram-negative porin family. As to quaternary structure, homotrimer. Mixed heterotrimers with other porins are also probable.

It localises to the cell outer membrane. Its function is as follows. Forms pores that allow passive diffusion of small molecules across the outer membrane. The sequence is that of Outer membrane porin OmpD from Salmonella typhimurium (strain SL1344).